A 188-amino-acid chain; its full sequence is Marginal zone B- and B1-cell-specific protein (188 aa).

A signal peptide spans Met1–Gly21. 3 cysteine pairs are disulfide-bonded: Cys49/Cys177, Cys52/Cys170, and Cys94/Cys142. Positions Arg185 to Leu188 match the Prevents secretion from ER motif.

Belongs to the MZB1 family. Part of the ER chaperone complex, a multi-protein complex in the endoplasmic reticulum containing a large number of molecular chaperones which associates with unassembled incompletely folded immunoglobulin heavy chains. Interacts with HSP90B1 and PDIA3 in a calcium-dependent manner. In terms of processing, forms an interchain disulfide bond with IgM monomers.

Its subcellular location is the endoplasmic reticulum lumen. It is found in the secreted. Associates with immunoglobulin M (IgM) heavy and light chains and promotes IgM assembly and secretion. May exert its effect by acting as a molecular chaperone or as an oxidoreductase as it displays a low level of oxidoreductase activity. Helps to diversify peripheral B-cell functions by regulating Ca(2+) stores, antibody secretion, and integrin activation. Functionally, acts as a hormone-regulated adipokine/pro-inflammatory cytokine that is implicated in causing chronic inflammation, affecting cellular expansion and blunting insulin response in adipocytes. May have a role in the onset of insulin resistance. In Rattus norvegicus (Rat), this protein is Marginal zone B- and B1-cell-specific protein (Mzb1).